The primary structure comprises 398 residues: Streptopain (398 aa).

The first 27 residues, 1–27, serve as a signal peptide directing secretion; sequence MNKKKLGIRLLSLLALGGFVLANPVFA. Residues 28–145 constitute a propeptide that is removed on maturation; sequence DQNFARNEKE…TTYAGTAEIK (118 aa). The active-site Nucleophile is cysteine 192. Position 192 is a cysteine methyl disulfide; in zymogen form (cysteine 192). Positions 282 and 339 each coordinate a protein. Histidine 340 acts as the Proton acceptor in catalysis. The segment at 368 to 390 is C-terminal active site loop; sequence RLDALNPSALGTGGGAGGFNGYQ.

Belongs to the peptidase C10 family. In terms of assembly, monomer. In terms of processing, the mature protease is derived from the precursor sequence by cleavage, either in cis via an autocatalytic mechanism, or in trans by mature SpeB or host proteases (trypsin, plasmin or subtilisin). Maturation can involve a number of protein cleavage intermediates. Mature SpeB probably plays the most important role in protein maturation in physiological conditions. Methylthiolation at Cys-192 of the inactive zymogen form is probably involved in the mechanism of secretion of the proteinase into the culture fluid.

The protein resides in the secreted. Its subcellular location is the host extracellular space. The protein localises to the host cytoplasm. The enzyme catalyses Preferential cleavage with hydrophobic residues at P2, P1 and P1'.. Its activity is regulated as follows. Synthesized as an inactive zymogen to protect the intracellular components of the bacteria from proteolytic activity during protein production. Once secreted into the extracellular milieu, cleaved into the active protease: maturation can be mediated in cis by autocatalytic cleavage, or in trans by mature SpeB or host proteases. Protease activity is strongly inhibited by zinc and copper, which prevent its maturation into an active protease: inhibition by metal ions may be required to prevent proteolysis of streptococcal proteins. Its function is as follows. Cysteine protease that acts as a key streptococcal virulence factor by cleaving host proteins involved in immune response. Triggers inflammation by mediating cleavage of host proteins, which can both promote host pathogenesis by triggering sterile inflammation and/or restrict streptococcal infection, depending on host immune statue and infection site. Cleaves host gasdermin-A (GSDMA) in epithelial cells, promoting GSDMA activation and formation of gasdermin pores, triggering pyroptosis. Pyroptosis triggers the elimination of the infected skin cell, depriving the pathogen of its protective niche, while inducing an inflammatory response. This ultimately prevents bacterial penetration of the epithelial barrier and a subsequent systemic dissemination of the pathogen. Also mediates cleavage of the cytokine precursor interleukin-1 beta (IL1B) to its mature form, resulting in inflammation and septic shock. SpeB-mediated maturation of IL1B plays a dual role depending on infection site: while IL1B inflammatory response prevents bacterial growth during invasive skin infections, it promotes streptococcal infection of the nasopharynx by disrupting colonization resistance mediated by the microbiota. Inhibits host autophagy be catalyzing cleavage and inactivation of key autophagy factors, such as CALCOCO2, NBR1 and SQSTM1. Cleaves and inhibits a number of complement factors, such as C2, C3-beta chain of C3, C4, C5 or SERPING1, thereby promoting evasion of host immunity. May also impair adaptive immunity by catalyzing cleavage and degradation of host immunoglobulins to promote immune system evasion; the relevance of this activity is however unsure in vivo. Catalyzes maturation and release of the peptide hormone bradykinin from the precursor Kininogen-1 (KNG1) to produce hypotension during septic shock. Also involved in bacterial translocation across the host epithelial barrier by mediating cleavage and degradation of host epithelial junction proteins, such as CDH1 and OCLN. Additionally, has been involved in degradation of fibronectin and vitronectin, two host extracellular matrix proteins involved in tissue integrity. Also able to catalyze cleavage and degradation of streptococcal proteins, such as C5a peptidase, EndoS or SmeZ. Degradation of streptococcal proteins is however strictly regulated to preserve integrity of other virulence factors. The sequence is that of Streptopain (speB) from Streptococcus pyogenes serotype M28 (strain MGAS6180).